The following is a 253-amino-acid chain: Triosephosphate isomerase (253 aa).

Residue 9–11 participates in substrate binding; the sequence is NWK. Histidine 95 functions as the Electrophile in the catalytic mechanism. The active-site Proton acceptor is the glutamate 167. Substrate contacts are provided by residues glycine 173, serine 213, and 234–235; that span reads GG. Serine 213 carries the phosphoserine modification.

The protein belongs to the triosephosphate isomerase family. In terms of assembly, homodimer.

The protein resides in the cytoplasm. It carries out the reaction D-glyceraldehyde 3-phosphate = dihydroxyacetone phosphate. It participates in carbohydrate biosynthesis; gluconeogenesis. Its pathway is carbohydrate degradation; glycolysis; D-glyceraldehyde 3-phosphate from glycerone phosphate: step 1/1. Involved in the gluconeogenesis. Catalyzes stereospecifically the conversion of dihydroxyacetone phosphate (DHAP) to D-glyceraldehyde-3-phosphate (G3P). This is Triosephosphate isomerase from Lysinibacillus sphaericus (strain C3-41).